The primary structure comprises 320 residues: D-alanine--D-alanine ligase (320 aa).

Residues Ser120–Lys314 enclose the ATP-grasp domain. Met147 to Gln198 contributes to the ATP binding site. Glu267, Glu281, and Asn283 together coordinate Mg(2+).

Belongs to the D-alanine--D-alanine ligase family. Mg(2+) serves as cofactor. The cofactor is Mn(2+).

It is found in the cytoplasm. It catalyses the reaction 2 D-alanine + ATP = D-alanyl-D-alanine + ADP + phosphate + H(+). It participates in cell wall biogenesis; peptidoglycan biosynthesis. Its function is as follows. Cell wall formation. The protein is D-alanine--D-alanine ligase of Rickettsia akari (strain Hartford).